A 377-amino-acid polypeptide reads, in one-letter code: Succinyl-diaminopimelate desuccinylase (377 aa).

His-66 is a Zn(2+) binding site. Residue Asp-68 is part of the active site. Asp-99 is a Zn(2+) binding site. The active-site Proton acceptor is the Glu-133. Positions 134, 162, and 348 each coordinate Zn(2+).

The protein belongs to the peptidase M20A family. DapE subfamily. As to quaternary structure, homodimer. It depends on Zn(2+) as a cofactor. The cofactor is Co(2+).

It carries out the reaction N-succinyl-(2S,6S)-2,6-diaminopimelate + H2O = (2S,6S)-2,6-diaminopimelate + succinate. Its pathway is amino-acid biosynthesis; L-lysine biosynthesis via DAP pathway; LL-2,6-diaminopimelate from (S)-tetrahydrodipicolinate (succinylase route): step 3/3. In terms of biological role, catalyzes the hydrolysis of N-succinyl-L,L-diaminopimelic acid (SDAP), forming succinate and LL-2,6-diaminopimelate (DAP), an intermediate involved in the bacterial biosynthesis of lysine and meso-diaminopimelic acid, an essential component of bacterial cell walls. In Chromobacterium violaceum (strain ATCC 12472 / DSM 30191 / JCM 1249 / CCUG 213 / NBRC 12614 / NCIMB 9131 / NCTC 9757 / MK), this protein is Succinyl-diaminopimelate desuccinylase.